The primary structure comprises 131 residues: Hydrogenase maturation factor HypA (131 aa).

Residue H2 coordinates Ni(2+). Residues C73, C76, C105, and C108 each contribute to the Zn(2+) site.

This sequence belongs to the HypA/HybF family.

Involved in the maturation of [NiFe] hydrogenases. Required for nickel insertion into the metal center of the hydrogenase. In Thermomicrobium roseum (strain ATCC 27502 / DSM 5159 / P-2), this protein is Hydrogenase maturation factor HypA.